The chain runs to 72 residues: Small, acid-soluble spore protein C (72 aa).

Belongs to the alpha/beta-type SASP family.

Its function is as follows. SASP are bound to spore DNA. They are double-stranded DNA-binding proteins that cause DNA to change to an a-like conformation. They protect the DNA backbone from chemical and enzymatic cleavage and are thus involved in dormant spore's high resistance to UV light. In Bacillus subtilis (strain 168), this protein is Small, acid-soluble spore protein C (sspC).